Here is a 181-residue protein sequence, read N- to C-terminus: Inner membrane-spanning protein YciB (181 aa).

Helical transmembrane passes span 8-28 (FPIICFFVAYKFWGIYIATAA), 53-73 (ITLIFILLLGSFTLVFHNAIF), 76-96 (WKPTIVYWIFAIVLFGSHFFG), 121-141 (LSWALFFLILGVLNLFVVYNF), and 149-169 (FKLFGTLVLTLVFILGQAFYI).

Belongs to the YciB family.

Its subcellular location is the cell inner membrane. Its function is as follows. Plays a role in cell envelope biogenesis, maintenance of cell envelope integrity and membrane homeostasis. This is Inner membrane-spanning protein YciB from Coxiella burnetii (strain RSA 331 / Henzerling II).